A 1864-amino-acid chain; its full sequence is RNA1 polyprotein (1864 aa).

The region spanning 457-622 (LERLHRNAAV…VEYQSDDFTA (166 aa)) is the SF3 helicase domain. 483 to 490 (GNSRCGKS) is an ATP binding site. A helical membrane pass occupies residues 892 to 912 (AGNGAGLVGAAVNSFSVVSTA). Residue Ser-916 is modified to O-(5'-phospho-RNA)-serine. The Peptidase C3 domain occupies 943-1146 (QMSLDQSTVS…MASLLPPLLP (204 aa)). Active-site for picornain 3C-like protease activity residues include His-983, Glu-1019, and Cys-1109. The RdRp catalytic domain occupies 1426–1556 (NDILCCDYSS…SVNAVVKPYF (131 aa)).

In terms of processing, specific enzymatic cleavages by picornain 3C-like protease in vivo yield mature proteins. Picornain 3C-like protease is autocatalytically processed. Uridylylated by the polymerase and is covalently linked to the 5'-end of genomic RNA. This uridylylated form acts as a nucleotide-peptide primer for the polymerase.

Its subcellular location is the host membrane. The protein localises to the host cytoplasm. The protein resides in the host perinuclear region. It localises to the host endoplasmic reticulum. It catalyses the reaction RNA(n) + a ribonucleoside 5'-triphosphate = RNA(n+1) + diphosphate. Thiol protease that cleaves the RNA1 and RNA2 polyproteins. Functionally, plays a role in RNA replication. It is covalently linked to the 5'terminus of both viral single-stranded RNA1 and RNA2 molecules. Its function is as follows. Down-regulates the RNA1 polyprotein processing and enhances trans-cleavage of RNA2 polyproteins. The protease cofactor and the putative helicase seem to target the replication complexes to ER membranes. Their physical association causes the membrane rearrangement of host ER that may result in formation of the small membranous vesicles that are the site of viral RNA synthesis. In terms of biological role, the protease cofactor and the putative helicase seem to target the replication complexes to ER membranes. Their physical association causes the membrane rearrangement of host ER that may result in formation of the small membranous vesicles that are the site of viral RNA synthesis. Replicates the viral genome. The polypeptide is RNA1 polyprotein (Trifolium pratense (Red clover)).